Reading from the N-terminus, the 579-residue chain is MMNLVLQYGLYILILVVLAIPLGNYIGKIMNGEKVFLSKILTPCENFIYKMLHIDKDEDMSWKKYSFSVLAFSIISLIVLFLIHIFQGFLPLNPEKVSGTSWDLAFNNAVSFVTNTNWQGYSGESSLSYFTQMMGLTVQNFVSAAVGISVLFALIRGFIRVKQKGIGNFWMDITRTVLYILIPLSIVVSLALVSQGVVQNFKQYETVSLLEPITLEDGTVVTEEVVPLGPAASQIAIKQLGTNGGGFMGTNSAHPIENPTVLSNLFEMISLLLIPVALCFTFGRNIKDRRQGIAIFIAMGIMLVVAMGIIGVNEQMGTPQMALNGQVDLSTINQAGGNMEGKEARFGIATSSTWATFTTAASNGSVNSMHDSYTPIGGMIPMLLMQLGEVVFGGVGCGLYGMIGFAILAVFMAGLMVGRTPEYLGKKIEPFEMKMAVLVCLATPIAILIGSGIASILPETVNSLNNSGAHGFSEVLYAYTSAGGNNGSAFAGFAANTPFINISIGLSMLFARFVPMMGTLAIAGSMVKKKKVAESVGTLPTHNAMFIGLLIFVVLLIGALSFFPALALGPIAEFFQMLG.

Helical transmembrane passes span 2–22 (MNLVLQYGLYILILVVLAIPL), 66–86 (SFSVLAFSIISLIVLFLIHIF), 135–155 (GLTVQNFVSAAVGISVLFALI), 177–197 (VLYILIPLSIVVSLALVSQGV), 262–282 (LSNLFEMISLLLIPVALCFTF), 292–312 (GIAIFIAMGIMLVVAMGIIGV), 391–411 (VFGGVGCGLYGMIGFAILAVF), 437–457 (VLVCLATPIAILIGSGIASIL), 490–510 (FAGFAANTPFINISIGLSMLF), and 546–566 (FIGLLIFVVLLIGALSFFPAL).

This sequence belongs to the KdpA family. As to quaternary structure, the system is composed of three essential subunits: KdpA, KdpB and KdpC.

The protein resides in the cell membrane. Its function is as follows. Part of the high-affinity ATP-driven potassium transport (or Kdp) system, which catalyzes the hydrolysis of ATP coupled with the electrogenic transport of potassium into the cytoplasm. This subunit binds the extracellular potassium ions and delivers the ions to the membrane domain of KdpB through an intramembrane tunnel. The sequence is that of Potassium-transporting ATPase potassium-binding subunit from Clostridium botulinum (strain Alaska E43 / Type E3).